Reading from the N-terminus, the 729-residue chain is Replication restart protein PriA (729 aa).

Positions Gln-209–Leu-376 constitute a Helicase ATP-binding domain. Position 222–229 (Gly-222–Thr-229) interacts with ATP. The DEAH box signature appears at Asp-319–His-322. Zn(2+) is bound by residues Cys-436, Cys-439, Cys-445, Cys-448, Cys-463, Cys-466, Cys-476, and Cys-479. Residues Pro-471–Asn-623 enclose the Helicase C-terminal domain.

This sequence belongs to the helicase family. PriA subfamily. As to quaternary structure, interacts with PriB with high affinity in the absence of DNA. Component of the replication restart primosome. It depends on Zn(2+) as a cofactor.

It carries out the reaction Couples ATP hydrolysis with the unwinding of duplex DNA by translocating in the 3'-5' direction.. It catalyses the reaction ATP + H2O = ADP + phosphate + H(+). Helicase and ATPase activities on forked DNA are stimulated by PriB; E.coli PriB does not stimulate this helicase. PriA:PriB complex-catalyzed duplex DNA winding is inhibited by CGS 15943 (CHEBI:131351). CGS 15943 decreases ATP hydrolysis and decreases PriA's affinity for DNA. In terms of biological role, initiates the restart of stalled replication forks, which reloads the replicative helicase on sites other than the origin of replication. Recognizes and binds to abandoned replication forks and remodels them to uncover a helicase loading site. Promotes assembly of the primosome at these replication forks. Functionally, DNA helicase with greatest unwinding activity on forked DNA substrates with relatively short duplex lagging strand arms. A DNA-dependent ATPase. Required for DNA transformation and DNA repair. Binds single-stranded (ss)DNA and replication fork-like DNA but not double-stranded (ds)DNA. The sequence is that of Replication restart protein PriA from Neisseria gonorrhoeae (strain ATCC 700825 / FA 1090).